The following is a 228-amino-acid chain: 2,3-bisphosphoglycerate-dependent phosphoglycerate mutase (228 aa).

Substrate-binding positions include 8–15, 21–22, R60, 87–90, K98, 114–115, and 180–181; these read RHGQSQWN, TG, ERHY, RR, and GN. The active-site Tele-phosphohistidine intermediate is H9. Catalysis depends on E87, which acts as the Proton donor/acceptor.

The protein belongs to the phosphoglycerate mutase family. BPG-dependent PGAM subfamily. As to quaternary structure, homodimer.

The enzyme catalyses (2R)-2-phosphoglycerate = (2R)-3-phosphoglycerate. The protein operates within carbohydrate degradation; glycolysis; pyruvate from D-glyceraldehyde 3-phosphate: step 3/5. Its function is as follows. Catalyzes the interconversion of 2-phosphoglycerate and 3-phosphoglycerate. This chain is 2,3-bisphosphoglycerate-dependent phosphoglycerate mutase, found in Sphingopyxis alaskensis (strain DSM 13593 / LMG 18877 / RB2256) (Sphingomonas alaskensis).